A 150-amino-acid polypeptide reads, in one-letter code: Peptide deformylase 1 (150 aa).

Residues Cys-88 and His-130 each coordinate Fe cation. Glu-131 is a catalytic residue. Residue His-134 coordinates Fe cation.

It belongs to the polypeptide deformylase family. Fe(2+) is required as a cofactor.

The catalysed reaction is N-terminal N-formyl-L-methionyl-[peptide] + H2O = N-terminal L-methionyl-[peptide] + formate. In terms of biological role, removes the formyl group from the N-terminal Met of newly synthesized proteins. Requires at least a dipeptide for an efficient rate of reaction. N-terminal L-methionine is a prerequisite for activity but the enzyme has broad specificity at other positions. The polypeptide is Peptide deformylase 1 (Clostridium acetobutylicum (strain ATCC 824 / DSM 792 / JCM 1419 / IAM 19013 / LMG 5710 / NBRC 13948 / NRRL B-527 / VKM B-1787 / 2291 / W)).